Here is an 87-residue protein sequence, read N- to C-terminus: Small ribosomal subunit protein bS16 (87 aa).

Belongs to the bacterial ribosomal protein bS16 family.

The sequence is that of Small ribosomal subunit protein bS16 from Ehrlichia ruminantium (strain Gardel).